The sequence spans 221 residues: Probable lipoprotein CT_734 (221 aa).

Positions Met1–Ser24 are cleaved as a signal peptide. Cys25 is lipidated: N-palmitoyl cysteine. Cys25 carries S-diacylglycerol cysteine lipidation.

The protein belongs to the chlamydial CPn_0875/CT_734/TC_0107 family.

Its subcellular location is the cell membrane. This is Probable lipoprotein CT_734 from Chlamydia trachomatis serovar D (strain ATCC VR-885 / DSM 19411 / UW-3/Cx).